A 61-amino-acid chain; its full sequence is Small ribosomal subunit protein uS14 (61 aa).

Cysteine 24, cysteine 27, cysteine 40, and cysteine 43 together coordinate Zn(2+).

Belongs to the universal ribosomal protein uS14 family. Zinc-binding uS14 subfamily. As to quaternary structure, part of the 30S ribosomal subunit. Contacts proteins S3 and S10. Zn(2+) is required as a cofactor.

Binds 16S rRNA, required for the assembly of 30S particles and may also be responsible for determining the conformation of the 16S rRNA at the A site. This chain is Small ribosomal subunit protein uS14, found in Mycobacterium avium (strain 104).